Here is a 389-residue protein sequence, read N- to C-terminus: 3-oxo-Delta(4,5)-steroid 5-beta-reductase (389 aa).

Residues 35-37 (TGI), 63-64 (RR), 81-82 (DI), T105, and Q143 contribute to the NADP(+) site. Catalysis depends on residues K147 and Y179. Residues Y179, I206, and 213–215 (SMM) each bind NADP(+).

This sequence belongs to the short-chain dehydrogenases/reductases (SDR) family. Highly divergent. As to quaternary structure, homodimer.

It catalyses the reaction 5beta-cholestan-3-one + NADP(+) = cholest-4-en-3-one + NADPH + H(+). It carries out the reaction 4,5beta-dihydrocortisone + NADP(+) = cortisone + NADPH + H(+). Involved in cardenolide biosynthesis. Catalyzes the stereospecific conversion of progesterone to 5-beta-pregnane-3,20-dione. Can use progesterone, testosterone, 4-androstene-3,17-dione, cortisol and cortisone as substrates, but not pregnenolone, 21-OH-pregnenolone or isoprogesterone. NADPH could not be replaced by NADH. The polypeptide is 3-oxo-Delta(4,5)-steroid 5-beta-reductase (Digitalis lanata (Grecian foxglove)).